Here is a 344-residue protein sequence, read N- to C-terminus: Dihydroorotate dehydrogenase (quinone) (344 aa).

Residues 65 to 69 (AGFDK) and T89 each bind FMN. K69 is a binding site for substrate. Residue 114–118 (NRMGF) coordinates substrate. FMN is bound by residues N145 and N178. N178 contacts substrate. S181 serves as the catalytic Nucleophile. N183 contacts substrate. FMN is bound by residues K215 and T243. 244–245 (NT) is a substrate binding site. Residues G269, G298, and 319 to 320 (YT) contribute to the FMN site.

The protein belongs to the dihydroorotate dehydrogenase family. Type 2 subfamily. As to quaternary structure, monomer. It depends on FMN as a cofactor.

The protein localises to the cell membrane. It carries out the reaction (S)-dihydroorotate + a quinone = orotate + a quinol. It participates in pyrimidine metabolism; UMP biosynthesis via de novo pathway; orotate from (S)-dihydroorotate (quinone route): step 1/1. Functionally, catalyzes the conversion of dihydroorotate to orotate with quinone as electron acceptor. This chain is Dihydroorotate dehydrogenase (quinone), found in Clavibacter michiganensis subsp. michiganensis (strain NCPPB 382).